The primary structure comprises 87 residues: Small ribosomal subunit protein bS20 (87 aa).

The interval 1-28 is disordered; it reads MANIKSQQKRNRTNERARLRNKSVKSSL.

The protein belongs to the bacterial ribosomal protein bS20 family.

Binds directly to 16S ribosomal RNA. This Mycobacterium marinum (strain ATCC BAA-535 / M) protein is Small ribosomal subunit protein bS20.